The chain runs to 298 residues: Ribosomal RNA small subunit methyltransferase H (298 aa).

S-adenosyl-L-methionine is bound by residues 35-37, aspartate 55, phenylalanine 82, aspartate 100, and glutamine 107; that span reads GGH.

Belongs to the methyltransferase superfamily. RsmH family.

It localises to the cytoplasm. The enzyme catalyses cytidine(1402) in 16S rRNA + S-adenosyl-L-methionine = N(4)-methylcytidine(1402) in 16S rRNA + S-adenosyl-L-homocysteine + H(+). In terms of biological role, specifically methylates the N4 position of cytidine in position 1402 (C1402) of 16S rRNA. The chain is Ribosomal RNA small subunit methyltransferase H from Chlamydia felis (strain Fe/C-56) (Chlamydophila felis).